Reading from the N-terminus, the 140-residue chain is Large ribosomal subunit protein uL16 (140 aa).

This sequence belongs to the universal ribosomal protein uL16 family. Part of the 50S ribosomal subunit.

In terms of biological role, binds 23S rRNA and is also seen to make contacts with the A and possibly P site tRNAs. The chain is Large ribosomal subunit protein uL16 from Amoebophilus asiaticus (strain 5a2).